Here is a 486-residue protein sequence, read N- to C-terminus: Aspartyl/glutamyl-tRNA(Asn/Gln) amidotransferase subunit B (486 aa).

This sequence belongs to the GatB/GatE family. GatB subfamily. As to quaternary structure, heterotrimer of A, B and C subunits.

It carries out the reaction L-glutamyl-tRNA(Gln) + L-glutamine + ATP + H2O = L-glutaminyl-tRNA(Gln) + L-glutamate + ADP + phosphate + H(+). The catalysed reaction is L-aspartyl-tRNA(Asn) + L-glutamine + ATP + H2O = L-asparaginyl-tRNA(Asn) + L-glutamate + ADP + phosphate + 2 H(+). Functionally, allows the formation of correctly charged Asn-tRNA(Asn) or Gln-tRNA(Gln) through the transamidation of misacylated Asp-tRNA(Asn) or Glu-tRNA(Gln) in organisms which lack either or both of asparaginyl-tRNA or glutaminyl-tRNA synthetases. The reaction takes place in the presence of glutamine and ATP through an activated phospho-Asp-tRNA(Asn) or phospho-Glu-tRNA(Gln). The sequence is that of Aspartyl/glutamyl-tRNA(Asn/Gln) amidotransferase subunit B from Janthinobacterium sp. (strain Marseille) (Minibacterium massiliensis).